A 246-amino-acid polypeptide reads, in one-letter code: Transcription factor MYB113 (246 aa).

2 HTH myb-type domains span residues 5–61 (PKGL…KPSI) and 62–112 (KRGK…SKKH). 2 DNA-binding regions (H-T-H motif) span residues 33–57 (WHRV…LNYL) and 85–108 (WSLI…NTHL).

Interacts with BHLH002/EGL3/MYC146, BHLH012/MYC1 and BHLH042/TT8.

The protein localises to the nucleus. Its function is as follows. Transcription activator, when associated with BHLH002/EGL3/MYC146, BHLH012/MYC1, or BHLH042/TT8. This Arabidopsis thaliana (Mouse-ear cress) protein is Transcription factor MYB113 (MYB113).